The following is a 294-amino-acid chain: Elongation factor Ts (294 aa).

An involved in Mg(2+) ion dislocation from EF-Tu region spans residues 81 to 84; sequence TDFV.

The protein belongs to the EF-Ts family.

It localises to the cytoplasm. Functionally, associates with the EF-Tu.GDP complex and induces the exchange of GDP to GTP. It remains bound to the aminoacyl-tRNA.EF-Tu.GTP complex up to the GTP hydrolysis stage on the ribosome. The polypeptide is Elongation factor Ts (tsf) (Mycoplasmopsis pulmonis (strain UAB CTIP) (Mycoplasma pulmonis)).